Here is a 188-residue protein sequence, read N- to C-terminus: HTH-type transcriptional regulator Mb3439c (188 aa).

Residues 17 to 77 (EEVAAAILQA…AVLDHLGTKL (61 aa)) form the HTH tetR-type domain. Positions 40–59 (SIRDIAARSKVNHGLVFRHF) form a DNA-binding region, H-T-H motif.

Its function is as follows. Negatively regulates the expression of sulfate ester dioxygenase Mb3440 and its own expression. This is HTH-type transcriptional regulator Mb3439c from Mycobacterium bovis (strain ATCC BAA-935 / AF2122/97).